The following is a 147-amino-acid chain: MAVHKEVSFVAYLLIVLGMFLYVDALGCTKECGNLGFGICPRSEGSPTNPICINCCSGYKGCNYYSAFGRFICEGESDPKNPKACPLNCDTNIAYSRCPRSEGKSLIYPTGCTTCCTGYKGCYYFGTNGKFVCEGESDEPKPYMSTA.

Positions 1-25 (MAVHKEVSFVAYLLIVLGMFLYVDA) are cleaved as a signal peptide. Tandem repeats lie at residues 25–81 (ALGC…DPKN) and 82–141 (PKAC…DEPK). 8 cysteine pairs are disulfide-bonded: cysteine 28–cysteine 116, cysteine 32–cysteine 112, cysteine 40–cysteine 122, cysteine 52–cysteine 89, cysteine 55–cysteine 73, cysteine 56–cysteine 85, cysteine 62–cysteine 98, and cysteine 115–cysteine 133.

It belongs to the protease inhibitor I20 (potato type II proteinase inhibitor) family.

The sequence is that of Proteinase inhibitor type-2 from Solanum tuberosum (Potato).